A 149-amino-acid polypeptide reads, in one-letter code: 3-dehydroquinate dehydratase (149 aa).

Residue tyrosine 22 is the Proton acceptor of the active site. Substrate-binding residues include asparagine 74, histidine 80, and aspartate 87. Histidine 100 functions as the Proton donor in the catalytic mechanism. Residues 101 to 102 and arginine 111 contribute to the substrate site; that span reads LS.

The protein belongs to the type-II 3-dehydroquinase family. As to quaternary structure, homododecamer.

The catalysed reaction is 3-dehydroquinate = 3-dehydroshikimate + H2O. It participates in metabolic intermediate biosynthesis; chorismate biosynthesis; chorismate from D-erythrose 4-phosphate and phosphoenolpyruvate: step 3/7. Functionally, catalyzes a trans-dehydration via an enolate intermediate. The sequence is that of 3-dehydroquinate dehydratase from Vesicomyosocius okutanii subsp. Calyptogena okutanii (strain HA).